Here is a 313-residue protein sequence, read N- to C-terminus: Elongation factor Ts (313 aa).

The involved in Mg(2+) ion dislocation from EF-Tu stretch occupies residues 82–85 (TDFV).

The protein belongs to the EF-Ts family.

It is found in the cytoplasm. Associates with the EF-Tu.GDP complex and induces the exchange of GDP to GTP. It remains bound to the aminoacyl-tRNA.EF-Tu.GTP complex up to the GTP hydrolysis stage on the ribosome. This Nostoc sp. (strain PCC 7120 / SAG 25.82 / UTEX 2576) protein is Elongation factor Ts.